The chain runs to 246 residues: E3 ubiquitin-protein ligase MARCHF2 (246 aa).

The RING-CH-type zinc finger occupies 56–116 (DTPSDGPFCR…ELCHTEFAVE (61 aa)). The tract at residues 56–116 (DTPSDGPFCR…ELCHTEFAVE (61 aa)) is required for inhibition of HIV-1 virus production and VSV G protein expression. Positions 64, 67, 80, 82, 90, 93, 106, and 109 each coordinate Zn(2+). Residues 121–246 (PLTEWLKDPG…LKKVAEETPV (126 aa)) form a required for interaction with IKBKG region. 2 helical membrane-spanning segments follow: residues 138-158 (LCCDMVCFLFITPLAAISGWL) and 175-195 (AVGLIALTIALFTIYVLWTLV).

Interacts with STX6; the interaction promotes MARCHF2-mediated ubiquitination and degradation of CFTR. Interacts with MARCHF3. Interacts with GOPC/CAL; the interaction leads to CFTR ubiquitination and degradation. Interacts with CFTR; the interaction leads to CFTR ubiqtuitination and degradation. Interacts (via PDZ domain) with DLG1 (via PDZ domains); the interaction leads to DLG1 ubiqtuitination and degradation. Interacts with ERGIC3. Interacts with ADRB2. Interacts with IKBKG/NEMO; during the late stages of macrophage viral and bacterial infection; the interaction leads to ubiquitination and degradation of IKBKG/NEMO. Broadly expressed.

Its subcellular location is the endoplasmic reticulum membrane. The protein localises to the lysosome membrane. The protein resides in the endosome membrane. It localises to the golgi apparatus membrane. It is found in the cytoplasm. Its subcellular location is the cell membrane. It catalyses the reaction S-ubiquitinyl-[E2 ubiquitin-conjugating enzyme]-L-cysteine + [acceptor protein]-L-lysine = [E2 ubiquitin-conjugating enzyme]-L-cysteine + N(6)-ubiquitinyl-[acceptor protein]-L-lysine.. The protein operates within protein modification; protein ubiquitination. Its function is as follows. E3 ubiquitin-protein ligase that may mediate ubiquitination of TFRC and CD86, and promote their subsequent endocytosis and sorting to lysosomes via multivesicular bodies. E3 ubiquitin ligases accept ubiquitin from an E2 ubiquitin-conjugating enzyme in the form of a thioester and then directly transfer the ubiquitin to targeted substrates. Together with GOPC/CAL mediates the ubiquitination and lysosomal degradation of CFTR. Ubiquitinates and therefore mediates the degradation of DLG1. Regulates the intracellular trafficking and secretion of alpha1-antitrypsin/SERPINA1 and HP/haptoglobin via ubiquitination and degradation of the cargo receptor ERGIC3. Negatively regulates the antiviral and antibacterial immune response by repression of the NF-kB and type 1 IFN signaling pathways, via MARCHF2-mediated K48-linked polyubiquitination of IKBKG/NEMO, resulting in its proteasomal degradation. May be involved in endosomal trafficking through interaction with STX6. Functionally, (Microbial infection) Positively regulates the degradation of Vesicular stomatitis virus (VSV) G protein via the lysosomal degradation pathway. Represses HIV-1 viral production and may inhibit the translocation of HIV-1 env to the cell surface, resulting in decreased viral cell-cell transmission. The protein is E3 ubiquitin-protein ligase MARCHF2 of Homo sapiens (Human).